A 144-amino-acid chain; its full sequence is Maximins 10/H15 (144 aa).

The first 18 residues, 1 to 18, serve as a signal peptide directing secretion; that stretch reads MNFKYIVAVSFLIASAYA. A propeptide spanning residues 19–43 is cleaved from the precursor; that stretch reads RSVQNDEQSLSQRDVLEEESLREIR. Serine amide is present on S70. A propeptide spanning residues 74–123 is cleaved from the precursor; sequence TAEDHEVMKRLEAVMRDLDSLDYPEEATERETRGFNQEEIANLFTKKEKR. L143 bears the Leucine amide mark.

It belongs to the bombinin family. As to expression, expressed by the skin glands.

It localises to the secreted. Functionally, maximin-10 shows antimicrobial activity against bacteria and against the fungus C.albicans. It has little hemolytic activity. Maximin-H15 shows antimicrobial activity against bacteria and against the fungus C.albicans. Shows strong hemolytic activity. The protein is Maximins 10/H15 of Bombina maxima (Giant fire-bellied toad).